A 320-amino-acid chain; its full sequence is SPX domain-containing protein 4 (320 aa).

The SPX domain occupies 1–170 (MKFGKDFRSH…GGLLSLPFTQ (170 aa)). Disordered regions lie at residues 209-233 (SSSA…VDVE) and 275-320 (CSGA…PRDE). Over residues 278–289 (AITSESDSYSDS) the composition is skewed to polar residues. The segment covering 290-299 (QIEDAEDDDK) has biased composition (acidic residues). The span at 304-313 (REQNTAQNAA) shows a compositional bias: polar residues.

As to quaternary structure, homodimer. Interacts (via N-terminus) with PHR2 (via C-terminus) in the presence of inositol polyphosphate. Interacts with BHLH6. Post-translationally, degraded under Pi starvation conditions through the ubiquitin/26S proteasome pathway. As to expression, widely expressed. Detected in root cells, with the exception of epidermis, and in mesophyll and vascular bundles in leaves.

It is found in the membrane. It localises to the nucleus. Its subcellular location is the cytoplasm. Inositol polyphosphate sensor that associates with transcription factors to regulate Pi starvation responses. The SPX domain provides a basic binding surface for inositol polyphosphate signaling molecules. Interacts with PHR2 to inhibit its translocation to the nucleus and repress its DNA-binding activity, and then negatively regulate Pi signaling. The protein is SPX domain-containing protein 4 of Oryza sativa subsp. japonica (Rice).